A 943-amino-acid chain; its full sequence is Isoleucine--tRNA ligase (943 aa).

A 'HIGH' region motif is present at residues 58-68; it reads PYANGNIHIGH. Residue E567 coordinates L-isoleucyl-5'-AMP. The short motif at 608-612 is the 'KMSKS' region element; it reads KMSKS. K611 is a binding site for ATP. Residues C906, C909, C926, and C929 each contribute to the Zn(2+) site.

The protein belongs to the class-I aminoacyl-tRNA synthetase family. IleS type 1 subfamily. Monomer. Zn(2+) serves as cofactor.

Its subcellular location is the cytoplasm. It carries out the reaction tRNA(Ile) + L-isoleucine + ATP = L-isoleucyl-tRNA(Ile) + AMP + diphosphate. Its function is as follows. Catalyzes the attachment of isoleucine to tRNA(Ile). As IleRS can inadvertently accommodate and process structurally similar amino acids such as valine, to avoid such errors it has two additional distinct tRNA(Ile)-dependent editing activities. One activity is designated as 'pretransfer' editing and involves the hydrolysis of activated Val-AMP. The other activity is designated 'posttransfer' editing and involves deacylation of mischarged Val-tRNA(Ile). The protein is Isoleucine--tRNA ligase of Stutzerimonas stutzeri (strain A1501) (Pseudomonas stutzeri).